A 452-amino-acid chain; its full sequence is Glycylpeptide N-tetradecanoyltransferase (452 aa).

Tetradecanoyl-CoA contacts are provided by residues 38–41 (YKFW), 171–173 (LCI), and 179–183 (SKRLA). Leucine 452 acts as the Proton acceptor; via carboxylate in catalysis.

It belongs to the NMT family. As to quaternary structure, monomer.

The protein localises to the cytoplasm. The enzyme catalyses N-terminal glycyl-[protein] + tetradecanoyl-CoA = N-tetradecanoylglycyl-[protein] + CoA + H(+). Its function is as follows. Adds a myristoyl group to the N-terminal glycine residue of certain cellular proteins. This is Glycylpeptide N-tetradecanoyltransferase (NMT1) from Eremothecium gossypii (strain ATCC 10895 / CBS 109.51 / FGSC 9923 / NRRL Y-1056) (Yeast).